A 429-amino-acid polypeptide reads, in one-letter code: Histidine--tRNA ligase (429 aa).

This sequence belongs to the class-II aminoacyl-tRNA synthetase family. Homodimer.

It is found in the cytoplasm. It carries out the reaction tRNA(His) + L-histidine + ATP = L-histidyl-tRNA(His) + AMP + diphosphate + H(+). This Streptococcus pneumoniae (strain P1031) protein is Histidine--tRNA ligase.